An 892-amino-acid chain; its full sequence is Alanine--tRNA ligase (892 aa).

4 residues coordinate Zn(2+): H593, H597, C694, and H698.

Belongs to the class-II aminoacyl-tRNA synthetase family. The cofactor is Zn(2+).

It is found in the cytoplasm. The enzyme catalyses tRNA(Ala) + L-alanine + ATP = L-alanyl-tRNA(Ala) + AMP + diphosphate. Functionally, catalyzes the attachment of alanine to tRNA(Ala) in a two-step reaction: alanine is first activated by ATP to form Ala-AMP and then transferred to the acceptor end of tRNA(Ala). Also edits incorrectly charged Ser-tRNA(Ala) and Gly-tRNA(Ala) via its editing domain. In Helicobacter hepaticus (strain ATCC 51449 / 3B1), this protein is Alanine--tRNA ligase.